Consider the following 663-residue polypeptide: Polyunsaturated fatty acid lipoxygenase ALOX15 (663 aa).

The 114-residue stretch at 2–115 (GLYRVRVSTG…ILSLPEGTAR (114 aa)) folds into the PLAT domain. Positions 116–663 (TVVDDPQGLF…PSRVENSVAI (548 aa)) constitute a Lipoxygenase domain. Fe cation contacts are provided by His361, His366, His541, His545, and Ile663.

Belongs to the lipoxygenase family. As to quaternary structure, interacts with PEBP1; in response to IL13/interleukin-13, prevents the interaction of PEBP1 with RAF1 to activate the ERK signaling cascade. Requires Fe cation as cofactor.

The protein resides in the cytoplasm. It is found in the cytosol. The protein localises to the cell membrane. Its subcellular location is the lipid droplet. The enzyme catalyses (5Z,8Z,11Z,14Z)-eicosatetraenoate + O2 = (12S)-hydroperoxy-(5Z,8Z,10E,14Z)-eicosatetraenoate. The catalysed reaction is (5Z,8Z,11Z,14Z)-eicosatetraenoate + O2 = (15S)-hydroperoxy-(5Z,8Z,11Z,13E)-eicosatetraenoate. It carries out the reaction (9Z,12Z)-octadecadienoate + O2 = (13S)-hydroperoxy-(9Z,11E)-octadecadienoate. It catalyses the reaction (5Z,8Z,11Z,14Z)-eicosatetraenoate + 2 O2 = (14R,15S)-dihydroperoxy-(5Z,8Z,10E,12E)-eicosatetraenoate. The enzyme catalyses (5Z,8Z,11Z,14Z)-eicosatetraenoate + 2 O2 = (8S,15S)-dihydroperoxy-(5Z,9E,11Z,13E)-eicosatetraenoate. The catalysed reaction is (14S,15R)-epoxy-(5Z,8Z,11Z)-eicosatrienoate + O2 = (8S)-hydroperoxy-(14S,15R)-epoxy-(5Z,9E,11Z)-eicosatrienoate. It carries out the reaction (14S,15R)-epoxy-(5Z,8Z,11Z)-eicosatrienoate + O2 = (12S)-hydroperoxy-(14S,15R)-epoxy-(5Z,8Z,10E)-eicosatrienoate. It catalyses the reaction (14R,15S)-epoxy-(5Z,8Z,11Z)-eicosatrienoate + O2 = (5S)-hydroperoxy-(14R,15S)-epoxy-(6E,8Z,11Z)-eicosatrienoate. The enzyme catalyses (14R,15S)-epoxy-(5Z,8Z,11Z)-eicosatrienoate + O2 = (12S)-hydroperoxy-(14R,15S)-epoxy-(5Z,8Z,10E)-eicosatrienoate. The catalysed reaction is (15R)-hydroperoxy-(5Z,8Z,11Z,13E)-eicosatetraenoate = 15-oxo-(5Z,8Z,11Z,13E)-eicosatetraenoate + H2O. It carries out the reaction (15S)-hydroperoxy-(5Z,8Z,11Z,13E)-eicosatetraenoate = (14S,15S)-epoxy-(5Z,8Z,10E,12E)-eicosatetraenoate + H2O. It catalyses the reaction (12S)-hydroperoxy-(5Z,8Z,10E,14Z)-eicosatetraenoate = (8S)-hydroxy-(11S,12S)-epoxy-(5Z,9E,14Z)-eicosatrienoate. The enzyme catalyses (4Z,7Z,10Z,13Z,16Z,19Z)-docosahexaenoate + O2 = 14-hydroperoxy-(4Z,7Z,10Z,12E,16Z,19Z)-docosahexaenoate. The catalysed reaction is (4Z,7Z,10Z,13Z,16Z)-docosapentaenoate + O2 = 14-hydroperoxy-(4Z,7Z,10Z,12E,16Z)-docosapentaenoate. It carries out the reaction (7Z,10Z,13Z,16Z,19Z)-docosapentaenoate + O2 = 14-hydroperoxy-(7Z,10Z,12E,16Z,19Z)-docosapentaenoate. It catalyses the reaction (4Z,7Z,10Z,13Z,16Z,19Z)-docosahexaenoate + O2 = (14S)-hydroperoxy-(4Z,7Z,10Z,12E,16Z,19Z)-docosahexaenoate. The enzyme catalyses (4Z,7Z,10Z,13Z,16Z,19Z)-docosahexaenoate + O2 = (17S)-hydroperoxy-(4Z,7Z,10Z,13Z,15E,19Z)-docosahexaenoate. The catalysed reaction is (7S)-hydroperoxy-(4Z,8E,10Z,13Z,16Z,19Z)-docosahexaenoate + O2 = (7S,14S)-dihydroperoxy-(4Z,8E,10Z,12E,16Z,19Z)-docosahexaenoate. It carries out the reaction (7S)-hydroperoxy-(4Z,8E,10Z,13Z,16Z,19Z)-docosahexaenoate + O2 = (7S,17S)-dihydroperoxy-(4Z,8E,10Z,13Z,15E,19Z)-docosahexaenoate. It catalyses the reaction (4Z,7Z,10Z,13Z,16Z,19Z)-docosahexaenoate + O2 = (11S)-hydroperoxy-(4Z,7Z,9E,13Z,16Z,19Z)-docosahexaenoate. The enzyme catalyses N-(5Z,8Z,11Z,14Z)-eicosatetraenoyl-taurine + O2 = N-(12S)-hydroperoxy-(5Z,8Z,10E,14Z)-eicosatetraenoyl-taurine. The catalysed reaction is N-(5Z,8Z,11Z,14Z)-eicosatetraenoyl-gamma-aminobutanoate + O2 = N-(12S)-hydroperoxy-(5Z,8Z,10E,14Z)-eicosatetraenoyl-gamma-aminobutanoate. It carries out the reaction N-(5Z,8Z,11Z,14Z)-eicosatetraenoyl-glycine + O2 = N-(12S)-hydroperoxy-(5Z,8Z,10E,14Z)-eicosatetraenoyl-glycine. It catalyses the reaction N-(5Z,8Z,11Z,14Z)-eicosatetraenoyl-L-alanine + O2 = N-(12S)-hydroperoxy-(5Z,8Z,10E,14Z)-eicosatetraenoyl-alanine. The enzyme catalyses N-(5Z,8Z,11Z,14Z)-eicosatetraenoyl-taurine + O2 = N-(15S)-hydroperoxy-(5Z,8Z,11Z,13E)-eicosatetraenoyl-taurine. The catalysed reaction is N-(5Z,8Z,11Z,14Z)-eicosatetraenoyl-gamma-aminobutanoate + O2 = N-(15S)-hydroperoxy-(5Z,8Z,11Z,13E)-eicosatetraenoyl-gamma-aminobutanoate. It carries out the reaction N-(5Z,8Z,11Z,14Z)-eicosatetraenoyl-glycine + O2 = N-(15S)-hydroperoxy-(5Z,8Z,11Z,13E)-eicosatetraenoyl-glycine. It catalyses the reaction N-(5Z,8Z,11Z,14Z)-eicosatetraenoyl-L-alanine + O2 = N-(15S)-hydroperoxy-(5Z,8Z,11Z,13E)-eicosatetraenoyl-alanine. It functions in the pathway lipid metabolism; hydroperoxy eicosatetraenoic acid biosynthesis. Non-heme iron-containing dioxygenase that catalyzes the stereo-specific peroxidation of free and esterified polyunsaturated fatty acids generating a spectrum of bioactive lipid mediators. It inserts peroxyl groups at C12 or C15 of arachidonate ((5Z,8Z,11Z,14Z)-eicosatetraenoate) producing both 12-hydroperoxyeicosatetraenoate/12-HPETE and 15-hydroperoxyeicosatetraenoate/15-HPETE. It may then act on 12-HPETE to produce hepoxilins, which may show pro-inflammatory properties. Can also peroxidize linoleate ((9Z,12Z)-octadecadienoate) to 13-hydroperoxyoctadecadienoate. May participate in the sequential oxidations of DHA ((4Z,7Z,10Z,13Z,16Z,19Z)-docosahexaenoate) to generate specialized pro-resolving mediators (SPMs)like resolvin D5 ((7S,17S)-diHPDHA) and (7S,14S)-diHPDHA, that actively down-regulate the immune response and have anti-aggregation properties with platelets. Can convert epoxy fatty acids to hydroperoxy-epoxides derivatives followed by an intramolecular nucleophilic substitution leading to the formation of monocyclic endoperoxides. Plays an important role during the maintenance of self-tolerance by peroxidizing membrane-bound phosphatidylethanolamine which can then signal the sorting process for clearance of apoptotic cells during inflammation and prevent an autoimmune response. In addition to its role in the immune and inflammatory responses, this enzyme may play a role in epithelial wound healing in the cornea through production of lipoxin A4 (LXA(4)) and docosahexaenoic acid-derived neuroprotectin D1 (NPD1; 10R,17S-HDHA), both lipid autacoids exhibit anti-inflammatory and neuroprotective properties. Furthermore, it may regulate actin polymerization which is crucial for several biological processes such as the phagocytosis of apoptotic cells. It is also implicated in the generation of endogenous ligands for peroxisome proliferator activated receptor (PPAR-gamma), hence modulating macrophage development and function. It may also exert a negative effect on skeletal development by regulating bone mass through this pathway. As well as participates in ER stress and downstream inflammation in adipocytes, pancreatic islets, and liver. Finally, it is also involved in the cellular response to IL13/interleukin-13. This chain is Polyunsaturated fatty acid lipoxygenase ALOX15, found in Sus scrofa (Pig).